We begin with the raw amino-acid sequence, 621 residues long: Zinc metalloproteinase-disintegrin-like TSV-DM (621 aa).

Residues 1 to 20 form the signal peptide; sequence MIQVLLVTICLAVFPYQGSS. Residues 21–191 constitute a propeptide that is removed on maturation; it reads IILESGNVND…EASQSNLTPE (171 aa). At Gln192 the chain carries Pyrrolidone carboxylic acid. A Peptidase M12B domain is found at 200-396; that stretch reads KYVKFFLVAD…NMPQCILKKP (197 aa). The N-linked (GlcNAc...) asparagine glycan is linked to Asn219. Disulfide bonds link Cys311–Cys391, Cys351–Cys375, and Cys353–Cys358. His336 provides a ligand contact to Zn(2+). Glu337 is a catalytic residue. Residues His340 and His346 each contribute to the Zn(2+) site. The 86-residue stretch at 404-489 folds into the Disintegrin domain; sequence PPVCGNYFVE…AECTDRFQRN (86 aa). Residues Val406, Asn409, Phe411, Glu413, Glu416, and Asp419 each coordinate Ca(2+). Cystine bridges form between Cys407–Cys436, Cys418–Cys431, Cys420–Cys426, Cys430–Cys453, Cys444–Cys450, Cys449–Cys475, Cys462–Cys482, Cys469–Cys500, Cys493–Cys505, Cys512–Cys562, Cys527–Cys573, Cys540–Cys550, Cys557–Cys599, and Cys593–Cys605. The short motif at 468–470 is the D/ECD-tripeptide element; sequence ECD. Ca(2+)-binding residues include Asp470, Met471, Asp473, Asp484, and Arg485. An N-linked (GlcNAc...) asparagine glycan is attached at Asn502.

It belongs to the venom metalloproteinase (M12B) family. P-III subfamily. P-IIIc sub-subfamily. In terms of assembly, homodimer; disulfide-linked. Zn(2+) is required as a cofactor. The N-terminus is blocked. Expressed by the venom gland.

Its subcellular location is the secreted. With respect to regulation, inhibited by EDTA and DTT, and partially inhibited by EGTA, but not inhibited by PMSF and NEM. Functionally, snake venom zinc metalloprotease that hydrolyzes the alpha-chain (FGA) and more slowly the beta-chain (FGB) of fibrinogen. Inhibits cell proliferation and induces cell morphologic changes transiently on human umbilical vein endothelial cells. This Trimeresurus stejnegeri (Chinese green tree viper) protein is Zinc metalloproteinase-disintegrin-like TSV-DM.